A 481-amino-acid polypeptide reads, in one-letter code: Ammonium transporter 2 member 3 (481 aa).

At 1–36 (MNFNSSKYISHLPESLLPNDASPEWNNKADNAWQLT) the chain is on the extracellular side. A glycan (N-linked (GlcNAc...) asparagine) is linked at Asn-4. Residues 37-57 (AATLVGLQTVPGLVILYGSMV) traverse the membrane as a helical segment. Residues 58-62 (KKKWA) are Cytoplasmic-facing. A helical transmembrane segment spans residues 63 to 83 (VNSAFMALYAFAAVLVCWVLW). The Extracellular segment spans residues 84–123 (AHHMAFGTKLLPFVGKPNFALSQKFLLSKASTNYYLPMAD). The chain crosses the membrane as a helical span at residues 124 to 144 (FVFYQFAFAAITLVLLGGSLL). Residues 145 to 151 (GRMNFYA) lie on the Cytoplasmic side of the membrane. A helical transmembrane segment spans residues 152-172 (WMLFVPLWLTLSYTVGAFTIW). Over 173–184 (GNGFLEGKIIDY) the chain is Extracellular. A helical transmembrane segment spans residues 185 to 205 (AGGFVIHLSSGVAGFTAAYWV). Residues 206–220 (GPRTSNDRQNFPPNN) lie on the Cytoplasmic side of the membrane. Residues 221 to 241 (IIHMLGGAGFLWMGWTGFNGG) form a helical membrane-spanning segment. Over 242 to 248 (APFQVGE) the chain is Extracellular. Residues 249 to 269 (ITSLAIFNTHLCTATSILVWI) form a helical membrane-spanning segment. At 270-281 (SLDMAVYKKGSL) the chain is on the cytoplasmic side. The chain crosses the membrane as a helical span at residues 282–302 (IGSVQGMMTGLVCITPGAGLV). At 303–304 (DP) the chain is on the extracellular side. A helical transmembrane segment spans residues 305–325 (WAAILMGALSGSIPWYTMMVL). Residues 326–338 (HKKSPFFQSVDDT) are Cytoplasmic-facing. The helical transmembrane segment at 339 to 359 (LGVFHTHAVAGILGGILSGVF) threads the bilayer. Residues 360–363 (AKPK) lie on the Extracellular side of the membrane. A helical membrane pass occupies residues 364–381 (LLRILYGPYGSGLLYSYF). Topologically, residues 382–395 (DDNIGQGIKQMWYQ) are cytoplasmic. Residues 396–416 (LLGAVFITIWNVVITSLICIL) form a helical membrane-spanning segment. At 417–481 (LNRFVNLRMQ…HSFPINKIDE (65 aa)) the chain is on the extracellular side.

The protein belongs to the ammonia transporter channel (TC 1.A.11.2) family. In terms of tissue distribution, mostly expressed in mycorrhizal roots. Also observed in the cortex and endodermis of non-mycorrhizal roots.

Its subcellular location is the cell membrane. In terms of biological role, involved in ammonium transport. Required for arbuscular mycorrhizal (AM) symbiosis with AM fungi (e.g. Glomus versiforme and G.intraradices) in low nitrogen conditions. This Medicago truncatula (Barrel medic) protein is Ammonium transporter 2 member 3.